A 480-amino-acid chain; its full sequence is Altronate oxidoreductase (480 aa).

19 to 30 (ILQFGEGNFLRG) is a binding site for NAD(+).

This sequence belongs to the mannitol dehydrogenase family. UxaB subfamily.

It carries out the reaction D-altronate + NAD(+) = keto-D-tagaturonate + NADH + H(+). It functions in the pathway carbohydrate metabolism; pentose and glucuronate interconversion. The polypeptide is Altronate oxidoreductase (Bacillus subtilis (strain 168)).